The chain runs to 78 residues: uncharacterized protein (78 aa).

Functionally, this protein may be involved in virus assembly. Essential for virus function. This is an uncharacterized protein from Sulfolobus spindle-shape virus 1 (SSV1).